Here is a 125-residue protein sequence, read N- to C-terminus: MVGKHCILELYDCDHAKLNDEAFLRTTITTAAKRAGATLLNLITHRFEPQGVTGLALLAESHLSIHTWPENGYAAVDVFTCGDQTMPEQACELLRQELGAKNHALKSFQRETPAALATAVRHPKA.

Residue S61 is the Schiff-base intermediate with substrate; via pyruvic acid of the active site. S61 is subject to Pyruvic acid (Ser); by autocatalysis. H66 functions as the Proton acceptor; for processing activity in the catalytic mechanism. C81 functions as the Proton donor; for catalytic activity in the catalytic mechanism.

It belongs to the prokaryotic AdoMetDC family. Type 1 subfamily. As to quaternary structure, heterotetramer of two alpha and two beta chains arranged as a dimer of alpha/beta heterodimers. Requires pyruvate as cofactor. Post-translationally, is synthesized initially as an inactive proenzyme. Formation of the active enzyme involves a self-maturation process in which the active site pyruvoyl group is generated from an internal serine residue via an autocatalytic post-translational modification. Two non-identical subunits are generated from the proenzyme in this reaction, and the pyruvate is formed at the N-terminus of the alpha chain, which is derived from the carboxyl end of the proenzyme. The post-translation cleavage follows an unusual pathway, termed non-hydrolytic serinolysis, in which the side chain hydroxyl group of the serine supplies its oxygen atom to form the C-terminus of the beta chain, while the remainder of the serine residue undergoes an oxidative deamination to produce ammonia and the pyruvoyl group blocking the N-terminus of the alpha chain.

The enzyme catalyses S-adenosyl-L-methionine + H(+) = S-adenosyl 3-(methylsulfanyl)propylamine + CO2. It participates in amine and polyamine biosynthesis; S-adenosylmethioninamine biosynthesis; S-adenosylmethioninamine from S-adenosyl-L-methionine: step 1/1. In terms of biological role, catalyzes the decarboxylation of S-adenosylmethionine to S-adenosylmethioninamine (dcAdoMet), the propylamine donor required for the synthesis of the polyamines spermine and spermidine from the diamine putrescine. This is S-adenosylmethionine decarboxylase proenzyme from Prochlorococcus marinus (strain MIT 9313).